The sequence spans 793 residues: E3 UFM1-protein ligase 1 (793 aa).

The required for E3 UFM1-protein ligase activity stretch occupies residues A2–F212. 2 disordered regions span residues A405 to L472 and G745 to E793. Positions E427–N439 are enriched in gly residues. Positions S767–D781 are enriched in basic and acidic residues.

This sequence belongs to the UFL1 family. Catalytic component of the UFM1 ribosome E3 ligase (UREL) complex. Interacts with E2-like enzyme UFC1.

The protein resides in the endoplasmic reticulum membrane. The protein localises to the cytoplasm. It localises to the cytosol. It is found in the nucleus. Its subcellular location is the chromosome. Its function is as follows. E3 protein ligase that mediates ufmylation, the covalent attachment of the ubiquitin-like modifier UFM1 to lysine residues on target proteins, and which plays a key role in various processes, such as ribosome recycling, response to DNA damage, interferon response or reticulophagy (also called ER-phagy). As part of the UREL complex, plays a key role in ribosome recycling by catalyzing mono-ufmylation of RPL26/uL24 subunit of the 60S ribosome. Ufmylation of RPL26/uL24 occurs on free 60S ribosomes following ribosome dissociation: it weakens the junction between post-termination 60S subunits and SEC61 translocons, promoting release and recycling of the large ribosomal subunit from the endoplasmic reticulum membrane. Ufmylation of RPL26/uL24 and subsequent 60S ribosome recycling either take place after normal termination of translation or after ribosome stalling during cotranslational translocation at the endoplasmic reticulum. Involved in reticulophagy in response to endoplasmic reticulum stress by mediating ufmylation of proteins such as CYB5R3 and RPN1, thereby promoting lysosomal degradation of ufmylated proteins. Ufmylation in response to endoplasmic reticulum stress is essential for processes such as hematopoiesis, blood vessel morphogenesis or inflammatory response. This chain is E3 UFM1-protein ligase 1, found in Danio rerio (Zebrafish).